A 175-amino-acid chain; its full sequence is ATP synthase subunit b (175 aa).

The chain crosses the membrane as a helical span at residues 22 to 44; it reads MLVQLFFFLILLALLKKFAWGPL.

The protein belongs to the ATPase B chain family. F-type ATPases have 2 components, F(1) - the catalytic core - and F(0) - the membrane proton channel. F(1) has five subunits: alpha(3), beta(3), gamma(1), delta(1), epsilon(1). F(0) has three main subunits: a(1), b(2) and c(10-14). The alpha and beta chains form an alternating ring which encloses part of the gamma chain. F(1) is attached to F(0) by a central stalk formed by the gamma and epsilon chains, while a peripheral stalk is formed by the delta and b chains.

It localises to the cell membrane. In terms of biological role, f(1)F(0) ATP synthase produces ATP from ADP in the presence of a proton or sodium gradient. F-type ATPases consist of two structural domains, F(1) containing the extramembraneous catalytic core and F(0) containing the membrane proton channel, linked together by a central stalk and a peripheral stalk. During catalysis, ATP synthesis in the catalytic domain of F(1) is coupled via a rotary mechanism of the central stalk subunits to proton translocation. Its function is as follows. Component of the F(0) channel, it forms part of the peripheral stalk, linking F(1) to F(0). The chain is ATP synthase subunit b from Oceanobacillus iheyensis (strain DSM 14371 / CIP 107618 / JCM 11309 / KCTC 3954 / HTE831).